Consider the following 464-residue polypeptide: Integrator complex subunit 12 (464 aa).

A disordered region spans residues 42-98 (GNDSVYRPQPKEVEQPKAMLSKVKPETKASSSTPSSSILSKPLASEKVKKEAEKRTA). Residues 69–84 (KASSSTPSSSILSKPL) show a composition bias toward low complexity. Over residues 85 to 98 (ASEKVKKEAEKRTA) the composition is skewed to basic and acidic residues. A PHD-type zinc finger spans residues 156–212 (GLACVVCRQMTVFSGNQLVECQECHNLYHQDCHRPQVTDKDVNDPRLVWYCARCTRQ). 2 disordered regions span residues 216 to 252 (MAQK…LKSK) and 312 to 445 (TNSQ…SQLN). Over residues 227–239 (PAPSAVSAVTPVA) the composition is skewed to low complexity. Residues 312–329 (TNSQATSGKPPSLSSVQK) show a composition bias toward polar residues. Residues 339 to 371 (SKAGSVSKSGSGGSSSTIPLKPLPPLILGKTGL) show a composition bias toward low complexity. A compositionally biased stretch (polar residues) spans 372–382 (SRSMSSDNVSK). Residues 384 to 421 (GLPSPNPSSSGSVSSLSSQLGSNNGSSNTAGSNVNSSN) show a composition bias toward low complexity. Residues 428–445 (SMQQSGAKGPTSQESQLN) show a composition bias toward polar residues.

It belongs to the Integrator subunit 12 family. As to quaternary structure, component of the Integrator complex, composed of core subunits INTS1, INTS2, INTS3, INTS4, INTS5, INTS6, INTS7, INTS8, INTS9/RC74, INTS10, INTS11/CPSF3L, INTS12, INTS13, INTS14 and INTS15. The core complex associates with protein phosphatase 2A subunits PPP2CA and PPP2R1A, to form the Integrator-PP2A (INTAC) complex.

The protein localises to the nucleus. Its function is as follows. Component of the integrator complex, a multiprotein complex that terminates RNA polymerase II (Pol II) transcription in the promoter-proximal region of genes. The integrator complex provides a quality checkpoint during transcription elongation by driving premature transcription termination of transcripts that are unfavorably configured for transcriptional elongation: the complex terminates transcription by (1) catalyzing dephosphorylation of the C-terminal domain (CTD) of Pol II subunit POLR2A/RPB1 and SUPT5H/SPT5, (2) degrading the exiting nascent RNA transcript via endonuclease activity and (3) promoting the release of Pol II from bound DNA. The integrator complex is also involved in terminating the synthesis of non-coding Pol II transcripts, such as enhancer RNAs (eRNAs), small nuclear RNAs (snRNAs), telomerase RNAs and long non-coding RNAs (lncRNAs). The polypeptide is Integrator complex subunit 12 (ints12) (Xenopus laevis (African clawed frog)).